Consider the following 134-residue polypeptide: Holo-[acyl-carrier-protein] synthase (134 aa).

Residues D8 and E57 each contribute to the Mg(2+) site.

Belongs to the P-Pant transferase superfamily. AcpS family. Mg(2+) is required as a cofactor.

Its subcellular location is the cytoplasm. The enzyme catalyses apo-[ACP] + CoA = holo-[ACP] + adenosine 3',5'-bisphosphate + H(+). Transfers the 4'-phosphopantetheine moiety from coenzyme A to a Ser of acyl-carrier-protein. In Agrobacterium fabrum (strain C58 / ATCC 33970) (Agrobacterium tumefaciens (strain C58)), this protein is Holo-[acyl-carrier-protein] synthase.